We begin with the raw amino-acid sequence, 807 residues long: MSTGHTIYHSLLKLPLSVMVKSSSIPSNPIEDLKIDLERPIIYALPFRSHVDLLTLQKSALELGLPDPLSPIEIEGVKYPRYVFTSIGPKMFDTDDDLPQESLDLFKIVLKHHADNPDADFQLIPTSILWGRKPGKEGTSKPHLMPLNGPQKFVTLIKAGRDSTVRISPVVSLRYMADNHGSDEAIAHKLARVAKIHFSRQKLAASGPNLPNRQALFNRLLKSQAIEKVILEEAKSRNVDVEKVRKEAMGIMEEIATNFSYSLIKNGNRILKWLWNRLYQGLNINNASTVRKLAQEGHEIVYVPCHRSHMDYLLLSYVLYHEGLVPPHIAAGINLNFFPAGPIFRRGGAFFIRRSFKGNRLYSTIFREYLAELFAKGYSVEYFSEGGRSRTGRLLQAKTGMLAMTVQAMLRGLNRPVTLVPVYIGYEHVMEVTTYAKELRGKRKEKENAGQVLRTLRKLRNFGQGYVNFGEPISLNHYLNEHAPNWSESINPIEPQKPEWMTPVVNGIANKMMTHINDAAAANALTLCATALLAANQRALSKEDLTEQLDCYLQILRNVPYSATATVPSEDADALLEHAIKLDKFVIEKDTLGEIVSLDRNQSLLMTYYRNNIIHLFALPSLIAKLVVHHDTITVEQIQDQIKLIYPFLKAELFLHYKEEELTSIVNNHIDELVQQNLILRDGDTLQLCNANIRKLHLLAHTISETLQRYAIALTHLQASPDLGKDELEEQSQIMAQRLSRLHGINAPEFFDKGVFCILFNTLKTEGYLDEDGAAVLSKVEPLSQDIAHLLTPEIKLTIHAVMTKED.

An HXXXXD motif motif is present at residues 305-310; it reads CHRSHM.

This sequence belongs to the GPAT/DAPAT family.

It is found in the cell inner membrane. It catalyses the reaction sn-glycerol 3-phosphate + an acyl-CoA = a 1-acyl-sn-glycero-3-phosphate + CoA. The protein operates within phospholipid metabolism; CDP-diacylglycerol biosynthesis; CDP-diacylglycerol from sn-glycerol 3-phosphate: step 1/3. This chain is Glycerol-3-phosphate acyltransferase, found in Aliivibrio fischeri (strain ATCC 700601 / ES114) (Vibrio fischeri).